Here is a 935-residue protein sequence, read N- to C-terminus: MSDYKDTLNLPKTSFSMKGNLANKEPMILNKWEKQGIYKKIREHFAGREKFVLHDGPPYANGSIHVGHAVNKILKDIIIKSKTLSGYDAPFTPTWDCHGLPIELQVEKKHGKAGQSISEDDFRKECRKYAKKQVEIQKKDFKRLGVLGDWEQPYLTMNFDYEANMIRTLAKIIENGHLSKGFKPVHWCTDCGSALAEAEVEYADKISPAIDVKFKIKDKDKLAQAFGLDSLNHDAFAIIWTTTPWTLPANQAIAVNNQLNYSLIKIEDFYIILAENLVEQTLKRYAIENAQIIATTTGDKLTGIIAEHPFYSRHVPILHGDHVTDDSGTGLVHTAPTHGVDDFTLGKEHNLSMEIFVKGNGCYSENTKLFAGEFIFKANDRIIELLGEKKRLMNSDKIKHSYPHCWRHKTPLMFRATPQWFISMEKQGLRNKALQAIKETSWAPSWGQARIEGMVKDRPDWCISRQRTWGVPLPLFIHKETEELHPNTIEILHKVAEKIEKGGIEAWFNADDCEFITETAQYKSVKDTLDVWFDSGSSSMCILDLDKRLSYPADLYLEGSDQHRGWFQTSLLVAMSAKGSQPYKEVFTHGFVVDEHGRKMSKSLGNVTSPQDIYNTLGADILRLWTASTDYKSEMAVSDQILKRTADTYRRLRNTARFLLSNLDGFNPATDIIEFDKLVKLDQWAIAKTKEFQDKIIEAYDKYQTHTVAQLIHHFCSIEMGSFYLDIIKDRQYTAKTDGHPRKSAQTAIYHIVHALVRWMAPILSFTADEIWDATPKTTDLPIQLCEWYTGLKSFDQDAELDLEYWAKIQEIRSEVNRVLEIKRNEDVVKASLEAEITIYADKDNYKLLEKLGNELRFLLISSKADLKVIEESTSSSIAANIPGLSIEITKIEEPKCERCWHRSSTVGDNPQYKDICSRCVENITTEAGESREFA.

Residues 58 to 68 carry the 'HIGH' region motif; the sequence is PYANGSIHVGH. Position 558 (E558) interacts with L-isoleucyl-5'-AMP. The 'KMSKS' region signature appears at 599–603; that stretch reads KMSKS. K602 is a binding site for ATP. Positions 897, 900, 917, and 920 each coordinate Zn(2+).

This sequence belongs to the class-I aminoacyl-tRNA synthetase family. IleS type 1 subfamily. As to quaternary structure, monomer. Requires Zn(2+) as cofactor.

The protein localises to the cytoplasm. It catalyses the reaction tRNA(Ile) + L-isoleucine + ATP = L-isoleucyl-tRNA(Ile) + AMP + diphosphate. Its function is as follows. Catalyzes the attachment of isoleucine to tRNA(Ile). As IleRS can inadvertently accommodate and process structurally similar amino acids such as valine, to avoid such errors it has two additional distinct tRNA(Ile)-dependent editing activities. One activity is designated as 'pretransfer' editing and involves the hydrolysis of activated Val-AMP. The other activity is designated 'posttransfer' editing and involves deacylation of mischarged Val-tRNA(Ile). This is Isoleucine--tRNA ligase from Francisella tularensis subsp. novicida (strain U112).